Here is a 209-residue protein sequence, read N- to C-terminus: Large ribosomal subunit protein uL3 (209 aa).

The disordered stretch occupies residues 133-152 (THGNSLSHRVPGSIGQNQTP). An N5-methylglutamine modification is found at Gln-150.

It belongs to the universal ribosomal protein uL3 family. In terms of assembly, part of the 50S ribosomal subunit. Forms a cluster with proteins L14 and L19. In terms of processing, methylated by PrmB.

Its function is as follows. One of the primary rRNA binding proteins, it binds directly near the 3'-end of the 23S rRNA, where it nucleates assembly of the 50S subunit. The sequence is that of Large ribosomal subunit protein uL3 from Yersinia enterocolitica serotype O:8 / biotype 1B (strain NCTC 13174 / 8081).